Reading from the N-terminus, the 396-residue chain is Tryptophan synthase beta chain (396 aa).

Lysine 86 is modified (N6-(pyridoxal phosphate)lysine).

This sequence belongs to the TrpB family. In terms of assembly, tetramer of two alpha and two beta chains. Pyridoxal 5'-phosphate is required as a cofactor.

The enzyme catalyses (1S,2R)-1-C-(indol-3-yl)glycerol 3-phosphate + L-serine = D-glyceraldehyde 3-phosphate + L-tryptophan + H2O. The protein operates within amino-acid biosynthesis; L-tryptophan biosynthesis; L-tryptophan from chorismate: step 5/5. Its function is as follows. The beta subunit is responsible for the synthesis of L-tryptophan from indole and L-serine. The sequence is that of Tryptophan synthase beta chain from Pectobacterium atrosepticum (strain SCRI 1043 / ATCC BAA-672) (Erwinia carotovora subsp. atroseptica).